A 129-amino-acid polypeptide reads, in one-letter code: Small ribosomal subunit protein uS11 (129 aa).

It belongs to the universal ribosomal protein uS11 family. In terms of assembly, part of the 30S ribosomal subunit. Interacts with proteins S7 and S18. Binds to IF-3.

Its function is as follows. Located on the platform of the 30S subunit, it bridges several disparate RNA helices of the 16S rRNA. Forms part of the Shine-Dalgarno cleft in the 70S ribosome. The protein is Small ribosomal subunit protein uS11 of Histophilus somni (strain 129Pt) (Haemophilus somnus).